We begin with the raw amino-acid sequence, 277 residues long: Thymidylate synthase (277 aa).

R21 contributes to the dUMP binding site. H51 lines the (6R)-5,10-methylene-5,6,7,8-tetrahydrofolate pocket. Residue 126 to 127 coordinates dUMP; the sequence is RR. C159 serves as the catalytic Nucleophile. DUMP contacts are provided by residues 179–182, N190, and 220–222; these read RSGD and HLY. D182 contacts (6R)-5,10-methylene-5,6,7,8-tetrahydrofolate. Residue A276 coordinates (6R)-5,10-methylene-5,6,7,8-tetrahydrofolate.

Belongs to the thymidylate synthase family. Bacterial-type ThyA subfamily. Homodimer.

It is found in the cytoplasm. It catalyses the reaction dUMP + (6R)-5,10-methylene-5,6,7,8-tetrahydrofolate = 7,8-dihydrofolate + dTMP. The protein operates within pyrimidine metabolism; dTTP biosynthesis. Its function is as follows. Catalyzes the reductive methylation of 2'-deoxyuridine-5'-monophosphate (dUMP) to 2'-deoxythymidine-5'-monophosphate (dTMP) while utilizing 5,10-methylenetetrahydrofolate (mTHF) as the methyl donor and reductant in the reaction, yielding dihydrofolate (DHF) as a by-product. This enzymatic reaction provides an intracellular de novo source of dTMP, an essential precursor for DNA biosynthesis. The sequence is that of Thymidylate synthase from Alcanivorax borkumensis (strain ATCC 700651 / DSM 11573 / NCIMB 13689 / SK2).